The chain runs to 185 residues: Ribosome-recycling factor (185 aa).

It belongs to the RRF family.

It localises to the cytoplasm. In terms of biological role, responsible for the release of ribosomes from messenger RNA at the termination of protein biosynthesis. May increase the efficiency of translation by recycling ribosomes from one round of translation to another. The protein is Ribosome-recycling factor of Vibrio cholerae serotype O1 (strain ATCC 39541 / Classical Ogawa 395 / O395).